A 341-amino-acid polypeptide reads, in one-letter code: Ketol-acid reductoisomerase (NADP(+)) (341 aa).

Residues Met-1–Thr-181 form the KARI N-terminal Rossmann domain. Residues Phe-24–Gln-27, Ser-50, Ser-52, and Asp-82–Gln-85 each bind NADP(+). His-107 is a catalytic residue. Gly-133 serves as a coordination point for NADP(+). The KARI C-terminal knotted domain maps to Thr-182–Gly-327. Mg(2+) is bound by residues Asp-190, Glu-194, Glu-226, and Glu-230. Position 251 (Ser-251) interacts with substrate.

This sequence belongs to the ketol-acid reductoisomerase family. It depends on Mg(2+) as a cofactor.

It catalyses the reaction (2R)-2,3-dihydroxy-3-methylbutanoate + NADP(+) = (2S)-2-acetolactate + NADPH + H(+). The catalysed reaction is (2R,3R)-2,3-dihydroxy-3-methylpentanoate + NADP(+) = (S)-2-ethyl-2-hydroxy-3-oxobutanoate + NADPH + H(+). It participates in amino-acid biosynthesis; L-isoleucine biosynthesis; L-isoleucine from 2-oxobutanoate: step 2/4. Its pathway is amino-acid biosynthesis; L-valine biosynthesis; L-valine from pyruvate: step 2/4. Its function is as follows. Involved in the biosynthesis of branched-chain amino acids (BCAA). Catalyzes an alkyl-migration followed by a ketol-acid reduction of (S)-2-acetolactate (S2AL) to yield (R)-2,3-dihydroxy-isovalerate. In the isomerase reaction, S2AL is rearranged via a Mg-dependent methyl migration to produce 3-hydroxy-3-methyl-2-ketobutyrate (HMKB). In the reductase reaction, this 2-ketoacid undergoes a metal-dependent reduction by NADPH to yield (R)-2,3-dihydroxy-isovalerate. In Rubrobacter xylanophilus (strain DSM 9941 / JCM 11954 / NBRC 16129 / PRD-1), this protein is Ketol-acid reductoisomerase (NADP(+)).